The sequence spans 217 residues: Large ribosomal subunit protein uL3 (217 aa).

Belongs to the universal ribosomal protein uL3 family. Part of the 50S ribosomal subunit. Forms a cluster with proteins L14 and L19.

In terms of biological role, one of the primary rRNA binding proteins, it binds directly near the 3'-end of the 23S rRNA, where it nucleates assembly of the 50S subunit. The chain is Large ribosomal subunit protein uL3 from Mycobacterium marinum (strain ATCC BAA-535 / M).